Consider the following 436-residue polypeptide: Histidinol dehydrogenase (436 aa).

3 residues coordinate NAD(+): Tyr-135, Gln-197, and Asn-220. Substrate is bound by residues Thr-243, Gln-265, and His-268. Positions 265 and 268 each coordinate Zn(2+). Active-site proton acceptor residues include Glu-334 and His-335. Substrate contacts are provided by His-335, Asp-368, Glu-422, and His-427. Asp-368 contacts Zn(2+). His-427 contributes to the Zn(2+) binding site.

It belongs to the histidinol dehydrogenase family. Zn(2+) is required as a cofactor.

The enzyme catalyses L-histidinol + 2 NAD(+) + H2O = L-histidine + 2 NADH + 3 H(+). Its pathway is amino-acid biosynthesis; L-histidine biosynthesis; L-histidine from 5-phospho-alpha-D-ribose 1-diphosphate: step 9/9. Its function is as follows. Catalyzes the sequential NAD-dependent oxidations of L-histidinol to L-histidinaldehyde and then to L-histidine. In Deinococcus radiodurans (strain ATCC 13939 / DSM 20539 / JCM 16871 / CCUG 27074 / LMG 4051 / NBRC 15346 / NCIMB 9279 / VKM B-1422 / R1), this protein is Histidinol dehydrogenase.